The sequence spans 121 residues: Large ribosomal subunit protein bL21c (121 aa).

Belongs to the bacterial ribosomal protein bL21 family. Part of the 50S ribosomal subunit.

It localises to the plastid. Its subcellular location is the chloroplast. In terms of biological role, this protein binds to 23S rRNA. In Chaetosphaeridium globosum (Charophycean green alga), this protein is Large ribosomal subunit protein bL21c.